The primary structure comprises 394 residues: 2-oxoglutarate and iron-dependent oxygenase domain-containing protein CP2 (394 aa).

The tract at residues Met-1–Thr-35 is disordered. The span at Val-17 to Thr-35 shows a compositional bias: polar residues. Residues Asp-248–Ser-347 form the Fe2OG dioxygenase domain. Fe cation contacts are provided by His-268, Asp-270, and His-328. Arg-338 provides a ligand contact to 2-oxoglutarate.

Requires Fe(2+) as cofactor. L-ascorbate is required as a cofactor. Expressed in roots, cotyledons, rosette leaves, cauline leaves, inflorescences and siliques.

It is found in the nucleus. Its subcellular location is the nucleoplasm. Its function is as follows. Participates in the epigenetic repression of flowering genes in association with ICU11. Functions in the repression of several members of the MADS-box transcription factors family, including SEP3, during vegetative development via histone modification. The chain is 2-oxoglutarate and iron-dependent oxygenase domain-containing protein CP2 from Arabidopsis thaliana (Mouse-ear cress).